The sequence spans 210 residues: Protein-L-isoaspartate O-methyltransferase (210 aa).

S59 is a catalytic residue.

It belongs to the methyltransferase superfamily. L-isoaspartyl/D-aspartyl protein methyltransferase family.

It localises to the cytoplasm. The enzyme catalyses [protein]-L-isoaspartate + S-adenosyl-L-methionine = [protein]-L-isoaspartate alpha-methyl ester + S-adenosyl-L-homocysteine. Functionally, catalyzes the methyl esterification of L-isoaspartyl residues in peptides and proteins that result from spontaneous decomposition of normal L-aspartyl and L-asparaginyl residues. It plays a role in the repair and/or degradation of damaged proteins. In Nitratidesulfovibrio vulgaris (strain ATCC 29579 / DSM 644 / CCUG 34227 / NCIMB 8303 / VKM B-1760 / Hildenborough) (Desulfovibrio vulgaris), this protein is Protein-L-isoaspartate O-methyltransferase.